We begin with the raw amino-acid sequence, 207 residues long: Coiled-coil domain-containing protein 25 (207 aa).

The Extracellular portion of the chain corresponds to 1-104 (MVFYFTSAVV…SNLKKTADMD (104 aa)). The DNA-binding stretch occupies residues 20-24 (KDKYE). The chain crosses the membrane as a helical span at residues 105–121 (IGQIGFHRQKEVKIVAV). Positions 112–189 (RQKEVKIVAV…EDLKNYTSLM (78 aa)) form a coiled coil. Over 122–207 (EKKINEIVNR…EDGYDSDDFM (86 aa)) the chain is Cytoplasmic. Basic and acidic residues predominate over residues 140 to 183 (YPDLAAEKESRDREERNEKKAQIQEQKKKEKEEVKKKKEMEDLK). The segment at 140–207 (YPDLAAEKES…EDGYDSDDFM (68 aa)) is disordered. Polar residues predominate over residues 184-198 (NYTSLMKSDNMTTNE). Ser-203 is modified (phosphoserine).

Belongs to the CCDC25 family. Interacts (via cytoplasmic region) with ILK.

The protein resides in the cell membrane. Its subcellular location is the endomembrane system. Functionally, transmembrane receptor that senses neutrophil extracellular traps (NETs) and triggers the ILK-PARVB pathway to enhance cell motility. NETs are mainly composed of DNA fibers and are released by neutrophils to bind pathogens during inflammation. Specifically binds NETs on its extracellular region, in particular the 8-OHdG-enriched DNA present in NETs, and recruits ILK, initiating the ILK-PARVB cascade to induce cytoskeleton rearrangement and directional migration of cells. In Danio rerio (Zebrafish), this protein is Coiled-coil domain-containing protein 25.